Consider the following 301-residue polypeptide: Protoheme IX farnesyltransferase (301 aa).

9 helical membrane passes run 16–36 (VVAL…PGMP), 41–61 (IQSG…AAAI), 93–113 (VFAG…VNLI), 114–134 (TAVL…VYLK), 141–161 (IVIG…AVTG), 172–192 (SLLV…LAIF), 217–237 (QILL…ATGM), 238–258 (SGVF…WYAW), and 273–293 (FGYS…DHWL).

This sequence belongs to the UbiA prenyltransferase family. Protoheme IX farnesyltransferase subfamily.

It is found in the cell inner membrane. It carries out the reaction heme b + (2E,6E)-farnesyl diphosphate + H2O = Fe(II)-heme o + diphosphate. The protein operates within porphyrin-containing compound metabolism; heme O biosynthesis; heme O from protoheme: step 1/1. Converts heme B (protoheme IX) to heme O by substitution of the vinyl group on carbon 2 of heme B porphyrin ring with a hydroxyethyl farnesyl side group. This is Protoheme IX farnesyltransferase from Xylella fastidiosa (strain Temecula1 / ATCC 700964).